The primary structure comprises 427 residues: Putative F-box protein At3g44060 (427 aa).

One can recognise an F-box domain in the interval 1-46 (MDCLPDDLLVQILYLLPTKEAVSTSVLSKRWRTLFTRSDNLDFHDP).

This is Putative F-box protein At3g44060 from Arabidopsis thaliana (Mouse-ear cress).